The chain runs to 356 residues: Phospho-N-acetylmuramoyl-pentapeptide-transferase (356 aa).

A run of 10 helical transmembrane segments spans residues 27-47, 73-93, 97-117, 134-154, 163-183, 195-215, 232-252, 258-278, 285-305, and 333-353; these read AAVA…ILML, TMGG…WMDL, FVWA…LDDY, LLVE…RTGT, GIVI…IVGF, GLAT…VYLS, AGEL…FLWF, AVFM…TIAV, VLVL…IQVF, and TVVI…LATL.

This sequence belongs to the glycosyltransferase 4 family. MraY subfamily. Mg(2+) is required as a cofactor.

Its subcellular location is the cell inner membrane. It catalyses the reaction UDP-N-acetyl-alpha-D-muramoyl-L-alanyl-gamma-D-glutamyl-meso-2,6-diaminopimeloyl-D-alanyl-D-alanine + di-trans,octa-cis-undecaprenyl phosphate = di-trans,octa-cis-undecaprenyl diphospho-N-acetyl-alpha-D-muramoyl-L-alanyl-D-glutamyl-meso-2,6-diaminopimeloyl-D-alanyl-D-alanine + UMP. The protein operates within cell wall biogenesis; peptidoglycan biosynthesis. Catalyzes the initial step of the lipid cycle reactions in the biosynthesis of the cell wall peptidoglycan: transfers peptidoglycan precursor phospho-MurNAc-pentapeptide from UDP-MurNAc-pentapeptide onto the lipid carrier undecaprenyl phosphate, yielding undecaprenyl-pyrophosphoryl-MurNAc-pentapeptide, known as lipid I. The chain is Phospho-N-acetylmuramoyl-pentapeptide-transferase from Sphingopyxis alaskensis (strain DSM 13593 / LMG 18877 / RB2256) (Sphingomonas alaskensis).